The following is a 57-amino-acid chain: Preprotein translocase subunit SecG (57 aa).

Topologically, residues 1–33 (MARRRRYEGLNPFVAAGLIKFSEEGELERIKLT) are cytoplasmic. Residues 34 to 55 (PKSAVVISVALIAAILVLNLIH) traverse the membrane as a helical segment. Topologically, residues 56 to 57 (PL) are extracellular.

It belongs to the SEC61-beta family. As to quaternary structure, component of the protein translocase complex. Heterotrimer consisting of alpha (SecY), beta (SecG) and gamma (SecE) subunits. Can form oligomers of the heterotrimer.

Its subcellular location is the cell membrane. Its function is as follows. Involved in protein export. The function of the beta subunit is unknown, but it may be involved in stabilization of the trimeric complex. The chain is Preprotein translocase subunit SecG from Pyrobaculum neutrophilum (strain DSM 2338 / JCM 9278 / NBRC 100436 / V24Sta) (Thermoproteus neutrophilus).